The sequence spans 248 residues: Segregation and condensation protein A (248 aa).

The protein belongs to the ScpA family. Component of a cohesin-like complex composed of ScpA, ScpB and the Smc homodimer, in which ScpA and ScpB bind to the head domain of Smc. The presence of the three proteins is required for the association of the complex with DNA.

The protein resides in the cytoplasm. Participates in chromosomal partition during cell division. May act via the formation of a condensin-like complex containing Smc and ScpB that pull DNA away from mid-cell into both cell halves. This chain is Segregation and condensation protein A, found in Clostridium perfringens (strain SM101 / Type A).